The sequence spans 99 residues: NADH-quinone oxidoreductase subunit K (99 aa).

Helical transmembrane passes span 3–23 (PANY…GVLL), 28–48 (IVMF…FVTF), and 59–79 (MIAF…LAII).

It belongs to the complex I subunit 4L family. NDH-1 is composed of 14 different subunits. Subunits NuoA, H, J, K, L, M, N constitute the membrane sector of the complex.

It is found in the cell membrane. The enzyme catalyses a quinone + NADH + 5 H(+)(in) = a quinol + NAD(+) + 4 H(+)(out). In terms of biological role, NDH-1 shuttles electrons from NADH, via FMN and iron-sulfur (Fe-S) centers, to quinones in the respiratory chain. The immediate electron acceptor for the enzyme in this species is believed to be a menaquinone. Couples the redox reaction to proton translocation (for every two electrons transferred, four hydrogen ions are translocated across the cytoplasmic membrane), and thus conserves the redox energy in a proton gradient. The polypeptide is NADH-quinone oxidoreductase subunit K (Mycobacterium bovis (strain ATCC BAA-935 / AF2122/97)).